The sequence spans 374 residues: U-box domain-containing protein 8 (374 aa).

The U-box domain maps to 4-79 (DLPNDFRCPI…LNFAHVSLKE (76 aa)). ARM repeat units follow at residues 126–165 (SSIRRKVTESGAVRAALDCVDSCNQVLQEKSLSLLLNLSL), 167–206 (DDNKVGLVADGVIRRIVTVLRVGSPDCKAIAATLLTSLAV), 208–248 (EVNK…ALCS), 250–288 (PDNRKRVVDCGSVPILVEAADSGLERAVEVLGLLVKCRG), and 289–327 (GREEMSKVSGFVEVLVNVLRNGNLKGIQYSLFILNCLCC).

Expressed in the whole plant.

The enzyme catalyses S-ubiquitinyl-[E2 ubiquitin-conjugating enzyme]-L-cysteine + [acceptor protein]-L-lysine = [E2 ubiquitin-conjugating enzyme]-L-cysteine + N(6)-ubiquitinyl-[acceptor protein]-L-lysine.. It functions in the pathway protein modification; protein ubiquitination. Functions as an E3 ubiquitin ligase. Involved in the age-dependent pseudo-self-compatibility process. The chain is U-box domain-containing protein 8 (PUB8) from Arabidopsis thaliana (Mouse-ear cress).